The following is a 368-amino-acid chain: Probable magnesium transporter NIPA3 (368 aa).

Topologically, residues 1 to 18 (MASLSGSWRDAYKGMSSD) are extracellular. The helical transmembrane segment at 19-39 (NIKGLVLALSSSLFIGASFIV) threads the bilayer. Residues 40 to 66 (KKKGLKRAGASGLRAGSGGYSYLLEPL) lie on the Cytoplasmic side of the membrane. Residues 67 to 87 (WWVGMITMIVGEIANFAAYAF) form a helical membrane-spanning segment. Residues 88-90 (APA) are Extracellular-facing. The chain crosses the membrane as a helical span at residues 91–111 (ILVTPLGALSIIISAALAHVI). Over 112-115 (LHEK) the chain is Cytoplasmic. The helical transmembrane segment at 116 to 136 (LHTFGLLGCVLCVVGSITIVL) threads the bilayer. Residues 137-157 (HAPQEQEIDSVLQVWNLATEP) are Extracellular-facing. Residues 158-178 (AFLLYAAAVVGAAIILIVQFV) traverse the membrane as a helical segment. The Cytoplasmic segment spans residues 179–189 (PQYGQSHVMVY). Residues 190–210 (IGVCSLVGSLSVMSVKALGIA) traverse the membrane as a helical segment. Over 211-220 (LKLTFSGMNQ) the chain is Extracellular. Residues 221–241 (LIYPQTWVFTLIVLTCVITQM) traverse the membrane as a helical segment. Topologically, residues 242-255 (NYLNKALDTFNTAV) are cytoplasmic. Residues 256–276 (VSPIYYVMFTSLTILASVIMF) traverse the membrane as a helical segment. The Extracellular segment spans residues 277-283 (KDWDRQD). A helical transmembrane segment spans residues 284–304 (GTQIVTELCGFVTILSGTFLL). At 305 to 368 (HKTKDMVDGS…ILPQDGPEAV (64 aa)) the chain is on the cytoplasmic side.

The protein belongs to the NIPA (TC 2.A.7) family. As to quaternary structure, homodimer.

The protein localises to the cell membrane. Its subcellular location is the early endosome. Its function is as follows. Acts as a Mg(2+) transporter. Can also transport other divalent cations such as Fe(2+), Sr(2+), Ba(2+), Mn(2+) and Co(2+) but to a much less extent than Mg(2+). In Arabidopsis thaliana (Mouse-ear cress), this protein is Probable magnesium transporter NIPA3.